Consider the following 678-residue polypeptide: Proprotein convertase subtilisin/kexin type 4 (678 aa).

A signal peptide spans 1–26 (MRPSQTALWLGLVLSLALLAVGWASA). Positions 27–110 (RPPIYVSSWA…QQTLRRRVKR (84 aa)) are excised as a propeptide. The Peptidase S8 domain occupies 123–437 (QWYMNKEIEQ…YGLLDAGLLV (315 aa)). Catalysis depends on charge relay system residues Asp-155, His-196, and Ser-370. One can recognise a P/Homo B domain in the interval 446–580 (TKPQKKCTIR…TLLLYGTAED (135 aa)). Asn-472 carries an N-linked (GlcNAc...) asparagine glycan.

Belongs to the peptidase S8 family. Furin subfamily. The proPCSK4 form interacts with HSPA5; the interaction takes place at the endoplasmic reticulum. Post-translationally, N-glycosylated. In terms of processing, synthesized in the endoplasmic reticulum as a zymogen, is matured by autocatalytic cleavage between the prodomain and the catalytic domain. In terms of tissue distribution, expressed abundantly in the testis. High levels seen in germ cells but not in Leydig, Sertoli or peritubular cells. Expressed in the pachytene spermatocytes and the round spermatids but not in the elongating spermatids. May be expressed within hormonally stimulated ovaries.

It is found in the cytoplasmic vesicle. It localises to the secretory vesicle. The protein resides in the acrosome membrane. Its function is as follows. Proprotein convertase involved in the processing of hormone and other protein precursors at sites comprised of pairs of basic amino acid residues. In males, important for ADAM2 processing as well as other acrosomal proteins with roles in fertilization and critical for normal fertilization events such as sperm capacitation, acrosome reaction and binding of sperm to zona pellucida. Plays also a role in female fertility, involved in the regulation of trophoblast migration and placental development, may be through the proteolytical processing and activation of proteins such as IGF2. May also participate in folliculogenesis in the ovaries. This is Proprotein convertase subtilisin/kexin type 4 (Pcsk4) from Rattus norvegicus (Rat).